The primary structure comprises 76 residues: Putative antitoxin VapB2 (76 aa).

It belongs to the UPF0330 family.

Its function is as follows. Possibly the antitoxin component of a type II toxin-antitoxin (TA) system. Its cognate toxin is VapC2 (Potential). In Pyrococcus abyssi (strain GE5 / Orsay), this protein is Putative antitoxin VapB2 (vapB2).